The sequence spans 90 residues: YcgL domain-containing protein Spro_2755 (90 aa).

One can recognise a YcgL domain in the interval 1–85; it reads MLCVIYRSSK…PLENLLKQHL (85 aa).

The sequence is that of YcgL domain-containing protein Spro_2755 from Serratia proteamaculans (strain 568).